Reading from the N-terminus, the 275-residue chain is Malonyl-[acyl-carrier protein] O-methyltransferase (275 aa).

This sequence belongs to the methyltransferase superfamily.

It catalyses the reaction malonyl-[ACP] + S-adenosyl-L-methionine = malonyl-[ACP] methyl ester + S-adenosyl-L-homocysteine. It participates in cofactor biosynthesis; biotin biosynthesis. Its function is as follows. Converts the free carboxyl group of a malonyl-thioester to its methyl ester by transfer of a methyl group from S-adenosyl-L-methionine (SAM). It allows to synthesize pimeloyl-ACP via the fatty acid synthetic pathway. The protein is Malonyl-[acyl-carrier protein] O-methyltransferase of Methylococcus capsulatus (strain ATCC 33009 / NCIMB 11132 / Bath).